Reading from the N-terminus, the 204-residue chain is High frequency lysogenization protein HflD homolog (204 aa).

It belongs to the HflD family.

It localises to the cytoplasm. The protein localises to the cell inner membrane. This chain is High frequency lysogenization protein HflD homolog, found in Stenotrophomonas maltophilia (strain K279a).